A 514-amino-acid polypeptide reads, in one-letter code: Protein nucleotidyltransferase YdiU (514 aa).

8 residues coordinate ATP: G90, G92, R93, K113, D125, G126, R176, and R183. D267 functions as the Proton acceptor in the catalytic mechanism. Residues N268 and D277 each contribute to the Mg(2+) site. D277 is a binding site for ATP.

This sequence belongs to the SELO family. Mg(2+) serves as cofactor. The cofactor is Mn(2+).

The catalysed reaction is L-seryl-[protein] + ATP = 3-O-(5'-adenylyl)-L-seryl-[protein] + diphosphate. It carries out the reaction L-threonyl-[protein] + ATP = 3-O-(5'-adenylyl)-L-threonyl-[protein] + diphosphate. It catalyses the reaction L-tyrosyl-[protein] + ATP = O-(5'-adenylyl)-L-tyrosyl-[protein] + diphosphate. The enzyme catalyses L-histidyl-[protein] + UTP = N(tele)-(5'-uridylyl)-L-histidyl-[protein] + diphosphate. The catalysed reaction is L-seryl-[protein] + UTP = O-(5'-uridylyl)-L-seryl-[protein] + diphosphate. It carries out the reaction L-tyrosyl-[protein] + UTP = O-(5'-uridylyl)-L-tyrosyl-[protein] + diphosphate. Its function is as follows. Nucleotidyltransferase involved in the post-translational modification of proteins. It can catalyze the addition of adenosine monophosphate (AMP) or uridine monophosphate (UMP) to a protein, resulting in modifications known as AMPylation and UMPylation. The protein is Protein nucleotidyltransferase YdiU of Photobacterium profundum (strain SS9).